The primary structure comprises 442 residues: Glutamyl-tRNA reductase (442 aa).

Substrate is bound by residues 50–53, S109, 114–116, and Q120; these read TCNR and EPQ. The active-site Nucleophile is the C51. An NADP(+)-binding site is contributed by 189–194; sequence GAGEMA.

This sequence belongs to the glutamyl-tRNA reductase family. In terms of assembly, homodimer.

It catalyses the reaction (S)-4-amino-5-oxopentanoate + tRNA(Glu) + NADP(+) = L-glutamyl-tRNA(Glu) + NADPH + H(+). It participates in porphyrin-containing compound metabolism; protoporphyrin-IX biosynthesis; 5-aminolevulinate from L-glutamyl-tRNA(Glu): step 1/2. Functionally, catalyzes the NADPH-dependent reduction of glutamyl-tRNA(Glu) to glutamate 1-semialdehyde (GSA). The protein is Glutamyl-tRNA reductase of Nitratidesulfovibrio vulgaris (strain DSM 19637 / Miyazaki F) (Desulfovibrio vulgaris).